The following is a 264-amino-acid chain: 3-methyl-2-oxobutanoate hydroxymethyltransferase (264 aa).

The Mg(2+) site is built by aspartate 44 and aspartate 83. 3-methyl-2-oxobutanoate is bound by residues 44–45 (DS), aspartate 83, and lysine 111. Glutamate 113 is a Mg(2+) binding site. Glutamate 180 (proton acceptor) is an active-site residue.

This sequence belongs to the PanB family. Homodecamer; pentamer of dimers. Mg(2+) serves as cofactor.

The protein localises to the cytoplasm. It carries out the reaction 3-methyl-2-oxobutanoate + (6R)-5,10-methylene-5,6,7,8-tetrahydrofolate + H2O = 2-dehydropantoate + (6S)-5,6,7,8-tetrahydrofolate. It participates in cofactor biosynthesis; (R)-pantothenate biosynthesis; (R)-pantoate from 3-methyl-2-oxobutanoate: step 1/2. Functionally, catalyzes the reversible reaction in which hydroxymethyl group from 5,10-methylenetetrahydrofolate is transferred onto alpha-ketoisovalerate to form ketopantoate. This Marinobacter nauticus (strain ATCC 700491 / DSM 11845 / VT8) (Marinobacter aquaeolei) protein is 3-methyl-2-oxobutanoate hydroxymethyltransferase.